A 362-amino-acid chain; its full sequence is Zinc transporter 9 (362 aa).

The first 21 residues, 1–21 (MAFDLKLTACLLLAVFSLAAA), serve as a signal peptide directing secretion. The Extracellular portion of the chain corresponds to 22 to 42 (ADCECQPSDEGHDAAKSRTLK). Residues 43 to 63 (VIAIFCILVGSSAGCAIPSLG) form a helical membrane-spanning segment. Over 64-74 (RRFPALRPDTS) the chain is Cytoplasmic. The helical transmembrane segment at 75–95 (LFFALKAFAAGVILATAFVHI) threads the bilayer. Over 96–120 (LPVSFDKLGSPCLVDGPWRKYPFTG) the chain is Extracellular. A helical membrane pass occupies residues 121–141 (LVAMLAAVATLLLDTIATGYF). Topologically, residues 142 to 207 (LQRAQDSRGA…EDRAKLVRHR (66 aa)) are cytoplasmic. A helical membrane pass occupies residues 208–228 (VISQVFELGIIVHSIIIGISL). The Extracellular segment spans residues 229–239 (GASESPSTIRP). The helical transmembrane segment at 240–260 (LVAALTFHQFFEGIGLGGCIV) threads the bilayer. At 261–269 (QARFHLKSA) the chain is on the cytoplasmic side. Residues 270 to 290 (VTMAIFFSLTTPVGIMIGIGI) traverse the membrane as a helical segment. Topologically, residues 291-301 (SSAYNENSPTA) are extracellular. Residues 302–322 (LIVEGILDAAAAGILNYMALV) traverse the membrane as a helical segment. Topologically, residues 323-341 (DLLAEDFMNPRVRKSGRLQ) are cytoplasmic. A helical transmembrane segment spans residues 342–362 (LIISILLLVGIALMSLLGIWA).

The protein belongs to the ZIP transporter (TC 2.A.5) family.

The protein resides in the cell membrane. In terms of biological role, zinc transporter that may be involved in zinc uptake from the rhizosphere. The chain is Zinc transporter 9 (ZIP9) from Oryza sativa subsp. japonica (Rice).